Consider the following 107-residue polypeptide: uncharacterized protein (107 aa).

Residues leucine 62 to alanine 79 form a helical membrane-spanning segment.

It localises to the nucleus membrane. This is an uncharacterized protein from Schizosaccharomyces pombe (strain 972 / ATCC 24843) (Fission yeast).